Here is a 240-residue protein sequence, read N- to C-terminus: Nuclear receptor-interacting protein 3 (240 aa).

The polypeptide is Nuclear receptor-interacting protein 3 (NRIP3) (Pongo abelii (Sumatran orangutan)).